We begin with the raw amino-acid sequence, 800 residues long: Ent-copalyl diphosphate synthase 2 (800 aa).

The interval 52–80 (QGQETRERRQLDDDEHARPPQGGDDDVAA) is disordered. Positions 55–69 (ETRERRQLDDDEHAR) are enriched in basic and acidic residues. Residue Lys242 coordinates substrate. Mg(2+) contacts are provided by Asp374 and Asp376. The DXDD motif motif lies at 374–377 (DIDD). Lys461 contacts substrate.

Belongs to the terpene synthase family. It depends on Mg(2+) as a cofactor.

It catalyses the reaction (2E,6E,10E)-geranylgeranyl diphosphate = ent-copalyl diphosphate. Catalyzes the conversion of geranylgeranyl diphosphate to the phytoalexin precursor ent-copalyl diphosphate. This is Ent-copalyl diphosphate synthase 2 (CPS2) from Oryza sativa subsp. indica (Rice).